The chain runs to 81 residues: Small ribosomal subunit protein bS16 (81 aa).

This sequence belongs to the bacterial ribosomal protein bS16 family.

The polypeptide is Small ribosomal subunit protein bS16 (Treponema denticola (strain ATCC 35405 / DSM 14222 / CIP 103919 / JCM 8153 / KCTC 15104)).